The sequence spans 118 residues: Ribonuclease P protein component 2 (118 aa).

Belongs to the eukaryotic/archaeal RNase P protein component 2 family. As to quaternary structure, consists of a catalytic RNA component and at least 4-5 protein subunits.

It localises to the cytoplasm. It catalyses the reaction Endonucleolytic cleavage of RNA, removing 5'-extranucleotides from tRNA precursor.. Its function is as follows. Part of ribonuclease P, a protein complex that generates mature tRNA molecules by cleaving their 5'-ends. This is Ribonuclease P protein component 2 from Pyrococcus abyssi (strain GE5 / Orsay).